A 325-amino-acid chain; its full sequence is Tagatose 1,6-diphosphate aldolase (325 aa).

Belongs to the aldolase LacD family.

It catalyses the reaction D-tagatofuranose 1,6-bisphosphate = D-glyceraldehyde 3-phosphate + dihydroxyacetone phosphate. The protein operates within carbohydrate metabolism; D-tagatose 6-phosphate degradation; D-glyceraldehyde 3-phosphate and glycerone phosphate from D-tagatose 6-phosphate: step 2/2. The polypeptide is Tagatose 1,6-diphosphate aldolase (Staphylococcus epidermidis (strain ATCC 35984 / DSM 28319 / BCRC 17069 / CCUG 31568 / BM 3577 / RP62A)).